The following is an 878-amino-acid chain: MKKLIYYFGSNGSDGNASMKDILGNKGAGLAEMSNLKLPIPDGFTITTELCNYFYTHDNSFPKNFRNELRTAVEKLEATTGKVFGSTKNPLLLSVRSGSIVSMPGMMDTILNLGMNDEVCAALGEVCKDKRFALDSYKRFLEMYGATVLSIPSDLFEQIYERHKIQADIYRDSDVTPQLLEKIIEDFKKLHVKYAEKLITDPYEQLESAIKAVLNSWMSNRAVIYRKINNISESSGTAINIQSMVFGNLSKTSATGVIFTRSPSTGEKKLFGEFLINAQGEDIVSGTRTPLPIISDDSNSMKATMPKVFDELSKISETLEKHYLDMQDIEFTIENSKLYILQTRTAKRTAIAAIKIAVQMVEEKLISKEQALMRIDPESLNQLLHTRIDYSKGLTSIADGLPASPGAATGIIVFSPYDAEKLSHHHKVILVRHDTSPEDINGMHVSSGILTIRGGMTSHAAVVARGMGKPCVCGTNNLVIDEKKQTLIAGDLILKQDDIITIDGGTGKVFLGAVPLIQPTFSEESKLILEWADETSKLKIRTNAETVSDALVSVKFGAKGIGLCRSEHMFFDKNKIPLVREMIIAPDIDRRKLAVQKLLPLQTQDFKALFRVMGDKPVNIRLLDPPLHEFLPTTEEDKKNLASSLNLPLSMINQRLHAMHEVNPMLGHRGCRLGICSPEIYQMQVEAIFTAIFELHKEENIECKLELMIPLISNVNEIKKLKGDIYEMIHELEERYEHKFSFSLGTMIELPRAALNSKKIAEEVDYFSFGTNDLTQTTYGISRDDIASFLPYYLEERIFESDPFTTLDEEGVGELIEIAIKRGKSSNPSLKLGACGEHAGHPASIEFFHKMNLDYVSCSPYRIPIARIAAAQAKIKHG.

Residues 1 to 347 (MKKLIYYFGS…LYILQTRTAK (347 aa)) form an N-terminal region. Arg-96 lines the ATP pocket. The tract at residues 348-404 (RTAIAAIKIAVQMVEEKLISKEQALMRIDPESLNQLLHTRIDYSKGLTSIADGLPAS) is linker 1. A central region spans residues 405–502 (PGAATGIIVF…ILKQDDIITI (98 aa)). The residue at position 457 (Thr-457) is a Phosphothreonine; by PDRP1. The active-site Tele-phosphohistidine intermediate is the His-459. Residues 503–537 (DGGTGKVFLGAVPLIQPTFSEESKLILEWADETSK) form a linker 2 region. The tract at residues 538–878 (LKIRTNAETV…AAAQAKIKHG (341 aa)) is C-terminal. Substrate contacts are provided by Arg-565, Arg-621, Glu-749, Gly-770, Thr-771, Asn-772, and Asp-773. A Mg(2+)-binding site is contributed by Glu-749. Asp-773 lines the Mg(2+) pocket. The active-site Proton donor is the Cys-835.

This sequence belongs to the PEP-utilizing enzyme family. In terms of assembly, homodimer. Mg(2+) serves as cofactor. In terms of processing, phosphorylation of Thr-457 in the dark inactivates the enzyme. Dephosphorylation upon light stimulation reactivates the enzyme.

The enzyme catalyses pyruvate + phosphate + ATP = phosphoenolpyruvate + AMP + diphosphate + H(+). Its activity is regulated as follows. Activated by light-induced dephosphorylation. Inhibited by dark-induced phosphorylation. Both reactions are catalyzed by PDRP1. Catalyzes the reversible phosphorylation of pyruvate and phosphate. The protein is Pyruvate, phosphate dikinase (ppdK) of Rickettsia bellii (strain RML369-C).